The primary structure comprises 143 residues: Transcriptional regulator MraZ (143 aa).

SpoVT-AbrB domains lie at 5–47 (EYEH…PRGV) and 76–119 (AADM…SPRR).

The protein belongs to the MraZ family. In terms of assembly, forms oligomers.

The protein localises to the cytoplasm. It localises to the nucleoid. This chain is Transcriptional regulator MraZ, found in Roseiflexus castenholzii (strain DSM 13941 / HLO8).